Consider the following 180-residue polypeptide: Adenine phosphoribosyltransferase (180 aa).

N-acetylserine is present on Ser-2. Phosphoserine occurs at positions 4, 15, and 30. Tyr-60 bears the Phosphotyrosine mark. Ser-66 is modified (phosphoserine). Residue Lys-114 is modified to N6-acetyllysine. Phosphothreonine is present on Thr-135.

It belongs to the purine/pyrimidine phosphoribosyltransferase family. In terms of assembly, homodimer.

The protein resides in the cytoplasm. It carries out the reaction AMP + diphosphate = 5-phospho-alpha-D-ribose 1-diphosphate + adenine. Its pathway is purine metabolism; AMP biosynthesis via salvage pathway; AMP from adenine: step 1/1. Functionally, catalyzes a salvage reaction resulting in the formation of AMP, that is energically less costly than de novo synthesis. In Rattus norvegicus (Rat), this protein is Adenine phosphoribosyltransferase.